The chain runs to 225 residues: NAD(P)H-quinone oxidoreductase subunit K, chloroplastic (225 aa).

4 residues coordinate [4Fe-4S] cluster: Cys43, Cys44, Cys108, and Cys139.

This sequence belongs to the complex I 20 kDa subunit family. NDH is composed of at least 16 different subunits, 5 of which are encoded in the nucleus. It depends on [4Fe-4S] cluster as a cofactor.

It is found in the plastid. It localises to the chloroplast thylakoid membrane. The enzyme catalyses a plastoquinone + NADH + (n+1) H(+)(in) = a plastoquinol + NAD(+) + n H(+)(out). It carries out the reaction a plastoquinone + NADPH + (n+1) H(+)(in) = a plastoquinol + NADP(+) + n H(+)(out). Functionally, NDH shuttles electrons from NAD(P)H:plastoquinone, via FMN and iron-sulfur (Fe-S) centers, to quinones in the photosynthetic chain and possibly in a chloroplast respiratory chain. The immediate electron acceptor for the enzyme in this species is believed to be plastoquinone. Couples the redox reaction to proton translocation, and thus conserves the redox energy in a proton gradient. The chain is NAD(P)H-quinone oxidoreductase subunit K, chloroplastic from Guizotia abyssinica (Niger).